Reading from the N-terminus, the 235-residue chain is 2,3,4,5-tetrahydropyridine-2,6-dicarboxylate N-acetyltransferase (235 aa).

The protein belongs to the transferase hexapeptide repeat family. DapH subfamily.

It catalyses the reaction (S)-2,3,4,5-tetrahydrodipicolinate + acetyl-CoA + H2O = L-2-acetamido-6-oxoheptanedioate + CoA. The protein operates within amino-acid biosynthesis; L-lysine biosynthesis via DAP pathway; LL-2,6-diaminopimelate from (S)-tetrahydrodipicolinate (acetylase route): step 1/3. Catalyzes the transfer of an acetyl group from acetyl-CoA to tetrahydrodipicolinate. This Exiguobacterium sibiricum (strain DSM 17290 / CCUG 55495 / CIP 109462 / JCM 13490 / 255-15) protein is 2,3,4,5-tetrahydropyridine-2,6-dicarboxylate N-acetyltransferase.